Reading from the N-terminus, the 357-residue chain is 3-dehydroquinate synthase (357 aa).

NAD(+) is bound by residues 104 to 108, 128 to 129, Lys141, and 168 to 171; these read GVVGD, TT, and FLET. Residues Glu183, His243, and His260 each contribute to the Zn(2+) site.

The protein belongs to the sugar phosphate cyclases superfamily. Dehydroquinate synthase family. Requires NAD(+) as cofactor. Co(2+) is required as a cofactor. The cofactor is Zn(2+).

The protein localises to the cytoplasm. The catalysed reaction is 7-phospho-2-dehydro-3-deoxy-D-arabino-heptonate = 3-dehydroquinate + phosphate. The protein operates within metabolic intermediate biosynthesis; chorismate biosynthesis; chorismate from D-erythrose 4-phosphate and phosphoenolpyruvate: step 2/7. Its function is as follows. Catalyzes the conversion of 3-deoxy-D-arabino-heptulosonate 7-phosphate (DAHP) to dehydroquinate (DHQ). The polypeptide is 3-dehydroquinate synthase (Streptococcus pyogenes serotype M18 (strain MGAS8232)).